Consider the following 44-residue polypeptide: Phycoerythrin alpha-1 chain (44 aa).

The tract at residues 1–44 is disordered; the sequence is AMDKSAKAPQITIFDHRGCSRAPKSETGGTATKDDQMMVKVSQV. Residue K4 is modified to 5-hydroxylysine. Residues C19 and R21 each contribute to the 15,16-dihydrobiliverdin site. A 15,16-dihydrobiliverdin chromophore region spans residues 24 to 26; sequence KSE. K40 contributes to the 15,16-dihydrobiliverdin binding site.

The protein belongs to the phycoerythrin family. In terms of assembly, heterotetramer of 2 different alpha chains and 2 identical beta chains. The subunit composition could comprise of any combination of 2 out of 4 different alpha units with an invariant beta unit. Contains one covalently linked 15,16-dihydrobiliverdin chromophore.

The protein resides in the plastid. Its subcellular location is the chloroplast thylakoid membrane. Light-harvesting photosynthetic tetrapyrrole chromophore-protein from the phycobiliprotein complex. This is Phycoerythrin alpha-1 chain (cpeA1) from Rhodomonas sp. (strain CS 24) (Chroomonas sp. (strain CS24)).